The chain runs to 434 residues: uncharacterized protein (434 aa).

The next 11 membrane-spanning stretches (helical) occupy residues 50 to 70 (GSIAFGLSIGFVASVGISFTL), 72 to 92 (TGLLNAWLLFLPTDILGVLAI), 95 to 115 (LMAFGLGAIWGVLILTCLLPV), 135 to 155 (SPVVSAFALFPLVAIFYQFGW), 158 to 178 (SLIAAVVVLMTRVVVVRYFPH), 179 to 199 (LNPESIEIFIGMVMLLGIAIT), 229 to 249 (LPYIAIVGALIAAVASMKIFA), 288 to 308 (GFVPLIATTALATGVYAVAGF), 319 to 339 (PNPMVAAVLGAVVISAEVLLL), 376 to 396 (IFAAIKMAGYTGFSIAVAIYF), and 412 to 432 (VVAVMITGILLNVLYWLGLFV).

It is found in the cell membrane. This is an uncharacterized protein from Escherichia coli (strain K12).